An 86-amino-acid chain; its full sequence is Small ribosomal subunit protein bS20 (86 aa).

The protein belongs to the bacterial ribosomal protein bS20 family.

Its function is as follows. Binds directly to 16S ribosomal RNA. This is Small ribosomal subunit protein bS20 from Bifidobacterium adolescentis (strain ATCC 15703 / DSM 20083 / NCTC 11814 / E194a).